Consider the following 344-residue polypeptide: Phosphoribosylformylglycinamidine cyclo-ligase (344 aa).

It belongs to the AIR synthase family.

Its subcellular location is the cytoplasm. It catalyses the reaction 2-formamido-N(1)-(5-O-phospho-beta-D-ribosyl)acetamidine + ATP = 5-amino-1-(5-phospho-beta-D-ribosyl)imidazole + ADP + phosphate + H(+). The protein operates within purine metabolism; IMP biosynthesis via de novo pathway; 5-amino-1-(5-phospho-D-ribosyl)imidazole from N(2)-formyl-N(1)-(5-phospho-D-ribosyl)glycinamide: step 2/2. The sequence is that of Phosphoribosylformylglycinamidine cyclo-ligase from Neisseria meningitidis serogroup C / serotype 2a (strain ATCC 700532 / DSM 15464 / FAM18).